The chain runs to 81 residues: Alpha-toxin Ac1 (81 aa).

The signal sequence occupies residues 1-17 (YIVMISLALVVMIGVES). In terms of domain architecture, LCN-type CS-alpha/beta spans 19 to 80 (RDGYIVYPNN…PIKDPSQKCT (62 aa)). 4 cysteine pairs are disulfide-bonded: cysteine 29-cysteine 79, cysteine 33-cysteine 51, cysteine 37-cysteine 61, and cysteine 41-cysteine 63.

Belongs to the long (4 C-C) scorpion toxin superfamily. Sodium channel inhibitor family. Alpha subfamily. In terms of tissue distribution, expressed by the venom gland.

The protein localises to the secreted. Its function is as follows. Alpha toxins bind voltage-independently at site-3 of sodium channels (Nav) and inhibit the inactivation of the activated channels, thereby blocking neuronal transmission. The sequence is that of Alpha-toxin Ac1 from Androctonus crassicauda (Arabian fat-tailed scorpion).